A 148-amino-acid chain; its full sequence is Cytochrome c oxidase subunit 6, mitochondrial (148 aa).

The transit peptide at 1 to 40 (MASFFRTAVRGPSAGLFRAVARPQPIAARVSLFSTSSRFR) directs the protein to the mitochondrion.

Belongs to the cytochrome c oxidase subunit 5A family. Component of the cytochrome c oxidase (complex IV, CIV), a multisubunit enzyme composed of 11 subunits. The complex is composed of a catalytic core of 3 subunits Cox1, Cox2 and Cox3, encoded in the mitochondrial DNA, and 8 supernumerary subunits Cox4, Cox5a/Cox5, Cox6, Cox7, Cox8, Cox7a/Cox9, Cox6b/Cox12 and Cox6a/Cox13, which are encoded in the nuclear genome. The complex exists as a monomer or a dimer and forms respiratory supercomplexes (SCs) in the inner mitochondrial membrane with NADH-ubiquinone oxidoreductase (complex I, CI) and ubiquinol-cytochrome c oxidoreductase (cytochrome b-c1 complex, complex III, CIII), resulting in various different assemblies (supercomplexes I(1)IV(1), I(1)III(3)IV(2), III(2)IV(1) and III(2)IV(2) as well as larger supercomplexes of compositions like I(1)III(2)IV(5-6)).

The protein localises to the mitochondrion inner membrane. It participates in energy metabolism; oxidative phosphorylation. Its function is as follows. Component of the cytochrome c oxidase, the last enzyme in the mitochondrial electron transport chain which drives oxidative phosphorylation. The respiratory chain contains 3 multisubunit complexes succinate dehydrogenase (complex II, CII), ubiquinol-cytochrome c oxidoreductase (cytochrome b-c1 complex, complex III, CIII) and cytochrome c oxidase (complex IV, CIV), that cooperate to transfer electrons derived from NADH and succinate to molecular oxygen, creating an electrochemical gradient over the inner membrane that drives transmembrane transport and the ATP synthase. Cytochrome c oxidase is the component of the respiratory chain that catalyzes the reduction of oxygen to water. Electrons originating from reduced cytochrome c in the intermembrane space (IMS) are transferred via the dinuclear copper A center (CU(A)) of Cox2 and heme A of Cox1 to the active site in Cox1, a binuclear center (BNC) formed by heme A3 and copper B (CU(B)). The BNC reduces molecular oxygen to 2 water molecules using 4 electrons from cytochrome c in the IMS and 4 protons from the mitochondrial matrix. This Neurospora crassa (strain ATCC 24698 / 74-OR23-1A / CBS 708.71 / DSM 1257 / FGSC 987) protein is Cytochrome c oxidase subunit 6, mitochondrial (cox-6).